Here is an 816-residue protein sequence, read N- to C-terminus: Endo-acting ulvan lyase (816 aa).

Residues 1-23 (MGTSVRRISVVLMMLFGTNFCWS) form the signal peptide.

The protein belongs to the polysaccharide lyase family.

Its subcellular location is the cell surface. The protein localises to the periplasm. Ulvan lyase involved in ulvan degradation. Ulvan is the main polysaccharide component of the Ulvales (green seaweed) cell wall. It is composed of disaccharide building blocks comprising 3-sulfated rhamnose (Rha3S) linked to D-glucuronic acid (GlcA), L-iduronic acid (IduA), or D-xylose (Xyl). Ulvan lyase catalyzes the endolytic cleavage of the glycosidic bond between Rha3S and the uronic acids GlcA or IduA, producing oligosaccharides that have unsaturated 4-deoxy-L-threo-hex-4-enopyranosiduronic acid (deltaUA) at the non-reducing end. This results eventually in the degradation of the ulvan polysaccharide into deltaUA-Rha3S disaccharides and deltaUA-Rha3S-Xyl-Rha3S tetrasaccharides. This is Endo-acting ulvan lyase from Formosa agariphila (strain DSM 15362 / KCTC 12365 / LMG 23005 / KMM 3901 / M-2Alg 35-1).